The primary structure comprises 319 residues: Mitochondrial fission regulator 1-like-A (319 aa).

The interval 1-37 (MASLGAAAEPERNLFGKDEAEAYESPEGRRSGRKKRT) is disordered. Residues 9–30 (EPERNLFGKDEAEAYESPEGRR) show a composition bias toward basic and acidic residues.

The protein belongs to the MTFR1 family.

It is found in the mitochondrion outer membrane. Mitochondrial protein required for adaptation of miochondrial dynamics to metabolic changes. Regulates mitochondrial morphology at steady state and mediates AMPK-dependent stress-induced mitochondrial fragmentation via the control of OPA1 levels. The sequence is that of Mitochondrial fission regulator 1-like-A (mtfr1l-a) from Xenopus laevis (African clawed frog).